The sequence spans 371 residues: Aminomethyltransferase (371 aa).

Belongs to the GcvT family. The glycine cleavage system is composed of four proteins: P, T, L and H.

It carries out the reaction N(6)-[(R)-S(8)-aminomethyldihydrolipoyl]-L-lysyl-[protein] + (6S)-5,6,7,8-tetrahydrofolate = N(6)-[(R)-dihydrolipoyl]-L-lysyl-[protein] + (6R)-5,10-methylene-5,6,7,8-tetrahydrofolate + NH4(+). The glycine cleavage system catalyzes the degradation of glycine. The protein is Aminomethyltransferase of Leptospira borgpetersenii serovar Hardjo-bovis (strain JB197).